Here is a 134-residue protein sequence, read N- to C-terminus: (R)-specific enoyl-CoA hydratase (134 aa).

One can recognise a MaoC-like domain in the interval 5–119 (SLEVGQKARL…ATLTTRIFTQ (115 aa)). A (3R)-3-hydroxyacyl-CoA-binding positions include 32-37 (DFNPLH), G55, and F84.

As to quaternary structure, homodimer.

It carries out the reaction a (3R)-3-hydroxyacyl-CoA = a (2E)-enoyl-CoA + H2O. Functionally, catalyzes the hydration of trans-2-enoyl-CoA with a chain-length of 4-6 carbon atoms, forming the corresponding (3R)-3-hydroxyacyl-CoA. The protein is (R)-specific enoyl-CoA hydratase (phaJ) of Aeromonas caviae (Aeromonas punctata).